Consider the following 191-residue polypeptide: Pyridoxal 5'-phosphate synthase subunit PdxT (191 aa).

48–50 (GES) provides a ligand contact to L-glutamine. The Nucleophile role is filled by Cys-81. L-glutamine contacts are provided by residues Arg-109 and 136–137 (IR). Active-site charge relay system residues include His-172 and Glu-174.

It belongs to the glutaminase PdxT/SNO family. In the presence of PdxS, forms a dodecamer of heterodimers. Only shows activity in the heterodimer.

It carries out the reaction aldehydo-D-ribose 5-phosphate + D-glyceraldehyde 3-phosphate + L-glutamine = pyridoxal 5'-phosphate + L-glutamate + phosphate + 3 H2O + H(+). The catalysed reaction is L-glutamine + H2O = L-glutamate + NH4(+). The protein operates within cofactor biosynthesis; pyridoxal 5'-phosphate biosynthesis. In terms of biological role, catalyzes the hydrolysis of glutamine to glutamate and ammonia as part of the biosynthesis of pyridoxal 5'-phosphate. The resulting ammonia molecule is channeled to the active site of PdxS. This Thermus thermophilus (strain ATCC BAA-163 / DSM 7039 / HB27) protein is Pyridoxal 5'-phosphate synthase subunit PdxT.